The following is a 408-amino-acid chain: Succinylornithine transaminase (408 aa).

Lys-252 is modified (N6-(pyridoxal phosphate)lysine).

The protein belongs to the class-III pyridoxal-phosphate-dependent aminotransferase family. AstC subfamily. Requires pyridoxal 5'-phosphate as cofactor.

It catalyses the reaction N(2)-succinyl-L-ornithine + 2-oxoglutarate = N-succinyl-L-glutamate 5-semialdehyde + L-glutamate. It participates in amino-acid degradation; L-arginine degradation via AST pathway; L-glutamate and succinate from L-arginine: step 3/5. In terms of biological role, catalyzes the transamination of N(2)-succinylornithine and alpha-ketoglutarate into N(2)-succinylglutamate semialdehyde and glutamate. Can also act as an acetylornithine aminotransferase. The sequence is that of Succinylornithine transaminase from Salmonella paratyphi A (strain ATCC 9150 / SARB42).